A 225-amino-acid polypeptide reads, in one-letter code: Ribonuclease HII (225 aa).

The RNase H type-2 domain occupies 35 to 225; the sequence is GLVAGVDEVG…SFRPCQISPD (191 aa). Aspartate 41, glutamate 42, and aspartate 137 together coordinate a divalent metal cation.

This sequence belongs to the RNase HII family. The cofactor is Mn(2+). It depends on Mg(2+) as a cofactor.

The protein resides in the cytoplasm. The catalysed reaction is Endonucleolytic cleavage to 5'-phosphomonoester.. In terms of biological role, endonuclease that specifically degrades the RNA of RNA-DNA hybrids. This chain is Ribonuclease HII, found in Nostoc sp. (strain PCC 7120 / SAG 25.82 / UTEX 2576).